Reading from the N-terminus, the 187-residue chain is GTP cyclohydrolase 1 (187 aa).

The Zn(2+) site is built by Cys-81, His-84, and Cys-152.

The protein belongs to the GTP cyclohydrolase I family. As to quaternary structure, homomer.

The enzyme catalyses GTP + H2O = 7,8-dihydroneopterin 3'-triphosphate + formate + H(+). It participates in cofactor biosynthesis; 7,8-dihydroneopterin triphosphate biosynthesis; 7,8-dihydroneopterin triphosphate from GTP: step 1/1. The polypeptide is GTP cyclohydrolase 1 (Pyrobaculum neutrophilum (strain DSM 2338 / JCM 9278 / NBRC 100436 / V24Sta) (Thermoproteus neutrophilus)).